The following is a 276-amino-acid chain: Polyamine aminopropyltransferase (276 aa).

Residues 3 to 236 form the PABS domain; it reads ELWYTEKQTK…GLWTFTIGSK (234 aa). S-methyl-5'-thioadenosine is bound at residue Gln32. 2 residues coordinate spermidine: His63 and Asp87. S-methyl-5'-thioadenosine contacts are provided by residues Asp107 and 138–139; that span reads DG. Asp156 (proton acceptor) is an active-site residue. 156–159 is a binding site for spermidine; the sequence is DSTE. Residue Pro163 participates in S-methyl-5'-thioadenosine binding.

Belongs to the spermidine/spermine synthase family. In terms of assembly, homodimer or homotetramer.

The protein resides in the cytoplasm. It carries out the reaction S-adenosyl 3-(methylsulfanyl)propylamine + putrescine = S-methyl-5'-thioadenosine + spermidine + H(+). It participates in amine and polyamine biosynthesis; spermidine biosynthesis; spermidine from putrescine: step 1/1. Involved in the cell growth and proliferation. Catalyzes the irreversible transfer of a propylamine group from the amino donor S-adenosylmethioninamine (decarboxy-AdoMet) to putrescine (1,4-diaminobutane) to yield spermidine. This Bacillus subtilis (strain 168) protein is Polyamine aminopropyltransferase.